The following is a 224-amino-acid chain: 25 kDa integral membrane protein (224 aa).

Over 1–12 (MKLSFTKVSLTN) the chain is Cytoplasmic. A helical transmembrane segment spans residues 13–33 (ILILFNCLFIIFSMIVLTFGV). Residues 34–52 (IPQIYLLKFANILHGVRPS) are Extracellular-facing. The chain crosses the membrane as a helical span at residues 53–73 (IFPIVCFTGSFVIIVACVGII). At 74 to 80 (GLMKGGK) the chain is on the cytoplasmic side. Residues 81 to 101 (CLLTMHIIALIIATIIDISTA) form a helical membrane-spanning segment. At 102 to 189 (TLSAIKQNEF…LNKYVRYYID (88 aa)) the chain is on the extracellular side. N-linked (GlcNAc...) asparagine glycosylation occurs at Asn120. The chain crosses the membrane as a helical span at residues 190-210 (ILIYLCFIFGFIKLIYSLFTF). Residues 211–224 (TQRQRIFSEKTPVA) lie on the Cytoplasmic side of the membrane.

It belongs to the tetraspanin (TM4SF) family.

The protein localises to the membrane. The polypeptide is 25 kDa integral membrane protein (Schistosoma japonicum (Blood fluke)).